Here is a 235-residue protein sequence, read N- to C-terminus: Phosphoribosylaminoimidazole-succinocarboxamide synthase (235 aa).

It belongs to the SAICAR synthetase family.

The enzyme catalyses 5-amino-1-(5-phospho-D-ribosyl)imidazole-4-carboxylate + L-aspartate + ATP = (2S)-2-[5-amino-1-(5-phospho-beta-D-ribosyl)imidazole-4-carboxamido]succinate + ADP + phosphate + 2 H(+). It participates in purine metabolism; IMP biosynthesis via de novo pathway; 5-amino-1-(5-phospho-D-ribosyl)imidazole-4-carboxamide from 5-amino-1-(5-phospho-D-ribosyl)imidazole-4-carboxylate: step 1/2. This Streptococcus pneumoniae serotype 4 (strain ATCC BAA-334 / TIGR4) protein is Phosphoribosylaminoimidazole-succinocarboxamide synthase (purC).